The following is a 500-amino-acid chain: MESSTTTSYSVVSELEGTLLKNPKPFAYFMLVAFEASGLIRFATLLFLWPIIALLDVLGYRNGSLKLMIFVATAGLHESEIESVARAVLPKFFMDDISMDAWRAFGSCDKRVVVTRMPRVMVERFAKDHLSADEVIGTEIVVNRFGYATGLIQETNVDQSVFNSVANLFVDRRPQLGLGRHIISDSPTFLSLCEEQVHAPVPSNYNGHNQRLHVQPLPVIFHDGRLVKLPTPATALIILLWIPFGIILAMIRIFVGFLLPLWAIPYVSRIFNTRFIVKGKPPAQATTGNPGVLFVCTHRTLMDPVVLSYVLGRSIPAVTYSISRLSEILSPIPTFRLTRIRDVDAEMIKKELSNGDLVVYPEGTTCREPFLLRFSALFAELTDNIVPVAMNYRVGFFHATTARGWKGLDPIFFFMNPRPVYEVTFLNQLEVEATCSSGKSPYDVANYVQRILAATLGFECTNFTRKDKYRVLAGNDGTVSYLSFLDQVKKVVTTFKPFLH.

The next 2 helical transmembrane spans lie at 38-58 (GLIR…LDVL) and 235-255 (ALII…RIFV). Positions 298 to 303 (HRTLMD) match the HXXXXD motif motif.

Belongs to the GPAT/DAPAT family. As to expression, weakly or not expressed in roots, leaves, seedlings, developing siliques and flower buds.

The protein localises to the membrane. It carries out the reaction sn-glycerol 3-phosphate + an acyl-CoA = a 1-acyl-sn-glycero-3-phosphate + CoA. It functions in the pathway phospholipid metabolism; CDP-diacylglycerol biosynthesis; CDP-diacylglycerol from sn-glycerol 3-phosphate: step 1/3. Functionally, esterifies acyl-group from acyl-ACP to the sn-1 position of glycerol-3-phosphate, an essential step in glycerolipid biosynthesis. In Arabidopsis thaliana (Mouse-ear cress), this protein is Glycerol-3-phosphate acyltransferase 7 (GPAT7).